Consider the following 468-residue polypeptide: Neuronal acetylcholine receptor subunit alpha-5 (468 aa).

Residues 1 to 22 form the signal peptide; the sequence is MAARGSGPRALRLLLLVQLVAG. Over 23 to 254 the chain is Extracellular; it reads RCGLAGAAGG…VIKRLPLFYT (232 aa). Asparagine 155, asparagine 183, and asparagine 229 each carry an N-linked (GlcNAc...) asparagine glycan. Cysteines 170 and 184 form a disulfide. A disulfide bridge links cysteine 234 with cysteine 235. 3 consecutive transmembrane segments (helical) span residues 255-275, 282-302, and 317-337; these read LFLIIPCIGLSFLTVLVFYLP, ICLCTSVLVSLTVFLLVIEEI, and LVFTMIFVTLSIMVTVFAINI. The Cytoplasmic portion of the chain corresponds to 338–429; sequence HHRSSSTHNA…WKFIAQVLDR (92 aa). Residues 430–451 form a helical membrane-spanning segment; that stretch reads MFLWTFLFVSIVGSLGLFVPVI. Topologically, residues 452-468 are extracellular; that stretch reads YKWANILIPVHIGNANK.

Belongs to the ligand-gated ion channel (TC 1.A.9) family. Acetylcholine receptor (TC 1.A.9.1) subfamily. Alpha-5/CHRNA5 sub-subfamily. In terms of assembly, neuronal AChR that forms heteropentamers composed of two different type of subunits: alpha and non-alpha (beta). CHRNA5/alpha-5 subunit is only able to form functional nAChRs when co-assembled with another alpha subunit, can be combined to CHRNA4/alpha-4 or CHRNA3/alpha-3 and CHRNB4/beta-4 or CHRNB2/beta-2 to give rise to functional receptors. Interacts with LYPD6.

The protein resides in the synaptic cell membrane. It is found in the cell membrane. It catalyses the reaction Ca(2+)(in) = Ca(2+)(out). The catalysed reaction is K(+)(in) = K(+)(out). The enzyme catalyses Na(+)(in) = Na(+)(out). Activated by a myriad of ligands such as acetylcholine, cytisine, nicotine, choline and epibatidine. Functionally, component of neuronal acetylcholine receptors (nAChRs) that function as pentameric, ligand-gated cation channels with high calcium permeability among other activities. nAChRs are excitatory neurotrasnmitter receptors formed by a collection of nAChR subunits known to mediate synaptic transmission in the nervous system and the neuromuscular junction. Each nAchR subunit confers differential attributes to channel properties, including activation, deactivation and desensitization kinetics, pH sensitivity, cation permeability, and binding to allosteric modulators. Has an accessory rather than functional role and is only able to form functional nAChRs when co-assembled with another beta subunit. Participates in pentameric assemblies along with CHRNA3, CHRNA4, CHRNB2 and CHRNB4. Increases receptor sensitivity to acetylcholine and nicotine when associated with CHRNA4 and CHRNB2. Plays a role in nicotine addiction. The sequence is that of Neuronal acetylcholine receptor subunit alpha-5 from Homo sapiens (Human).